The chain runs to 629 residues: MNESVAKKTQETLGKVIKKPPLTEKLLSKPPFRYLHDIFSEVIRTTGFMKGLYVEAEMKSDNVKDKDSKIAFLQKAIDVVMLVSGEPLAAKPARIVAGHEPEKTNELLQVIAKCCLNKLSSDEAVKRVLAGDKLDQKGKPSTSRSQDKENREGREHHRDREERKGIKESSGSREQKDPDQPKDQESKRDDKDRRRDAERSDKGRERERTKDRDRDKDKSRDREKDKTREKEREREKDRNREKERERDKDRDKKKERESHKDRERDKDREREKRREKEKDKERPRETEEKLKDRGDRKIKAAEEISKSKPQPEVASRTHQAETEEAESPSRIPRPSSAKGQRRKPKTGGQGTEQDETESEGEAEGPSAEKPIPLENGDVTDPAALQTTHSRRLPRPSSARPAAPRVKRQESYTDATPAERLGSGKTPASVILDGKKLSEDEDDEDGQFVVEEAAPPPSDVPEVESNSLELQGDDKHGGLVKKILETKKDYESSPSSKSKEQDRSLVSEASRKKERELVAREIERLRSSIQTVCRSALPLGKIMDYIQEDMDSMQNELQSWRKENKENAQALLQEQRITDGVVEPLKVELAELEQLIKDQQDKICAVKSNILKNEEKIQKMVSSISFSSQT.

Positions 130 to 511 (AGDKLDQKGK…RSLVSEASRK (382 aa)) are disordered. The segment covering 145–306 (SQDKENREGR…KIKAAEEISK (162 aa)) has biased composition (basic and acidic residues). The stretch at 220-282 (RDREKDKTRE…RREKEKDKER (63 aa)) forms a coiled coil. The span at 352–362 (EQDETESEGEA) shows a compositional bias: acidic residues. Over residues 394-403 (RPSSARPAAP) the composition is skewed to low complexity. Positions 471 to 511 (GDDKHGGLVKKILETKKDYESSPSSKSKEQDRSLVSEASRK) are enriched in basic and acidic residues. Positions 511 to 602 (KKERELVARE…QLIKDQQDKI (92 aa)) form a coiled coil.

Belongs to the TRAF3IP1 family. Component of the IFT complex B, at least composed of ift20, ift22, ift25, ift27, ift46, ift52, traf3ip1/ift54, ift57, ift74, ift80, ift81, and ift88. Interacts with ift88. Interacts with il13ra1. Binds to microtubules, traf3 and disc1. Interacts with map4.

Its subcellular location is the cytoplasm. The protein resides in the cytoskeleton. It localises to the cell projection. It is found in the cilium. The protein localises to the cilium axoneme. Its subcellular location is the cilium basal body. Plays an inhibitory role on IL13 signaling by binding to IL13RA1 and recruits TRAF3 and DISC1 to the microtubules. Involved in the regulation of microtubule cytoskeleton organization. Is a negative regulator of microtubule stability, acting through the control of MAP4 levels. Involved in ciliogenesis. The polypeptide is TRAF3-interacting protein 1 (traf3ip1) (Danio rerio (Zebrafish)).